Consider the following 223-residue polypeptide: Deoxyribose-phosphate aldolase (223 aa).

The active-site Proton donor/acceptor is D91. K153 serves as the catalytic Schiff-base intermediate with acetaldehyde. K182 (proton donor/acceptor) is an active-site residue.

This sequence belongs to the DeoC/FbaB aldolase family. DeoC type 1 subfamily.

It localises to the cytoplasm. It carries out the reaction 2-deoxy-D-ribose 5-phosphate = D-glyceraldehyde 3-phosphate + acetaldehyde. Its pathway is carbohydrate degradation; 2-deoxy-D-ribose 1-phosphate degradation; D-glyceraldehyde 3-phosphate and acetaldehyde from 2-deoxy-alpha-D-ribose 1-phosphate: step 2/2. Its function is as follows. Catalyzes a reversible aldol reaction between acetaldehyde and D-glyceraldehyde 3-phosphate to generate 2-deoxy-D-ribose 5-phosphate. The protein is Deoxyribose-phosphate aldolase of Yersinia enterocolitica serotype O:8 / biotype 1B (strain NCTC 13174 / 8081).